The following is a 255-amino-acid chain: tRNA pseudouridine synthase A (255 aa).

Asp52 acts as the Nucleophile in catalysis. Tyr111 contacts substrate.

This sequence belongs to the tRNA pseudouridine synthase TruA family. As to quaternary structure, homodimer.

The catalysed reaction is uridine(38/39/40) in tRNA = pseudouridine(38/39/40) in tRNA. Functionally, formation of pseudouridine at positions 38, 39 and 40 in the anticodon stem and loop of transfer RNAs. The protein is tRNA pseudouridine synthase A of Cereibacter sphaeroides (strain KD131 / KCTC 12085) (Rhodobacter sphaeroides).